A 74-amino-acid polypeptide reads, in one-letter code: MDAVQELEHRITELEIQSALQEDVIAGLNAMVAELRQTLDLQQAQLRLLYQKMQDRNPDAQEPYSLRDEIPPHY.

It belongs to the SlyX family.

In Neisseria meningitidis serogroup C / serotype 2a (strain ATCC 700532 / DSM 15464 / FAM18), this protein is Protein SlyX homolog.